The following is a 203-amino-acid chain: Adenylyl-sulfate kinase (203 aa).

35–42 (GLSGSGKS) provides a ligand contact to ATP. Residue serine 109 is the Phosphoserine intermediate of the active site.

This sequence belongs to the APS kinase family.

The catalysed reaction is adenosine 5'-phosphosulfate + ATP = 3'-phosphoadenylyl sulfate + ADP + H(+). It functions in the pathway sulfur metabolism; hydrogen sulfide biosynthesis; sulfite from sulfate: step 2/3. In terms of biological role, catalyzes the synthesis of activated sulfate. The sequence is that of Adenylyl-sulfate kinase from Geotalea daltonii (strain DSM 22248 / JCM 15807 / FRC-32) (Geobacter daltonii).